We begin with the raw amino-acid sequence, 144 residues long: Small ribosomal subunit protein bS6 (144 aa).

The tract at residues 95–144 is disordered; that stretch reads PVTTPSPMMQDDKSKPDENSRGTAAPTVNVADDSASGAQVVAAEENDTQS. The span at 104-114 shows a compositional bias: basic and acidic residues; it reads QDDKSKPDENS.

This sequence belongs to the bacterial ribosomal protein bS6 family.

Functionally, binds together with bS18 to 16S ribosomal RNA. This chain is Small ribosomal subunit protein bS6, found in Nitrosomonas eutropha (strain DSM 101675 / C91 / Nm57).